Reading from the N-terminus, the 990-residue chain is Glycine dehydrogenase (decarboxylating) (990 aa).

Lysine 726 bears the N6-(pyridoxal phosphate)lysine mark.

Belongs to the GcvP family. The glycine cleavage system is composed of four proteins: P, T, L and H. Pyridoxal 5'-phosphate is required as a cofactor.

It catalyses the reaction N(6)-[(R)-lipoyl]-L-lysyl-[glycine-cleavage complex H protein] + glycine + H(+) = N(6)-[(R)-S(8)-aminomethyldihydrolipoyl]-L-lysyl-[glycine-cleavage complex H protein] + CO2. In terms of biological role, the glycine cleavage system catalyzes the degradation of glycine. The P protein binds the alpha-amino group of glycine through its pyridoxal phosphate cofactor; CO(2) is released and the remaining methylamine moiety is then transferred to the lipoamide cofactor of the H protein. This Rhodopseudomonas palustris (strain ATCC BAA-98 / CGA009) protein is Glycine dehydrogenase (decarboxylating).